A 254-amino-acid polypeptide reads, in one-letter code: Sugar fermentation stimulation protein homolog (254 aa).

The protein belongs to the SfsA family.

The chain is Sugar fermentation stimulation protein homolog from Parasynechococcus marenigrum (strain WH8102).